The sequence spans 243 residues: Ubiquinone/menaquinone biosynthesis C-methyltransferase UbiE (243 aa).

S-adenosyl-L-methionine contacts are provided by residues Thr69, Asp90, and 116–117 (DA).

The protein belongs to the class I-like SAM-binding methyltransferase superfamily. MenG/UbiE family.

The catalysed reaction is a 2-demethylmenaquinol + S-adenosyl-L-methionine = a menaquinol + S-adenosyl-L-homocysteine + H(+). It carries out the reaction a 2-methoxy-6-(all-trans-polyprenyl)benzene-1,4-diol + S-adenosyl-L-methionine = a 5-methoxy-2-methyl-3-(all-trans-polyprenyl)benzene-1,4-diol + S-adenosyl-L-homocysteine + H(+). It functions in the pathway quinol/quinone metabolism; menaquinone biosynthesis; menaquinol from 1,4-dihydroxy-2-naphthoate: step 2/2. The protein operates within cofactor biosynthesis; ubiquinone biosynthesis. Methyltransferase required for the conversion of demethylmenaquinol (DMKH2) to menaquinol (MKH2) and the conversion of 2-polyprenyl-6-methoxy-1,4-benzoquinol (DDMQH2) to 2-polyprenyl-3-methyl-6-methoxy-1,4-benzoquinol (DMQH2). The sequence is that of Ubiquinone/menaquinone biosynthesis C-methyltransferase UbiE from Ralstonia nicotianae (strain ATCC BAA-1114 / GMI1000) (Ralstonia solanacearum).